The primary structure comprises 349 residues: Ferredoxin--NADP reductase 1 (349 aa).

FAD is bound by residues E36, K44, Y48, V88, L123, D290, and S331.

The protein belongs to the ferredoxin--NADP reductase type 2 family. As to quaternary structure, homodimer. Requires FAD as cofactor.

It carries out the reaction 2 reduced [2Fe-2S]-[ferredoxin] + NADP(+) + H(+) = 2 oxidized [2Fe-2S]-[ferredoxin] + NADPH. This is Ferredoxin--NADP reductase 1 from Lysinibacillus sphaericus (strain C3-41).